A 72-amino-acid polypeptide reads, in one-letter code: UPF0337 protein bsl2407 (72 aa).

The tract at residues 1–55 (MGSTTDKIKGNANEAIGKAKQGIGEATGSDRLKGEGVVQEVKGKGQQAMGDAKDA) is disordered. The span at 35–47 (EGVVQEVKGKGQQ) shows a compositional bias: low complexity.

This sequence belongs to the UPF0337 (CsbD) family.

The chain is UPF0337 protein bsl2407 from Bradyrhizobium diazoefficiens (strain JCM 10833 / BCRC 13528 / IAM 13628 / NBRC 14792 / USDA 110).